The chain runs to 185 residues: Adenylyl-sulfate kinase (185 aa).

13-20 is a binding site for ATP; that stretch reads GLSGAGKS. Serine 86 acts as the Phosphoserine intermediate in catalysis.

It belongs to the APS kinase family.

The catalysed reaction is adenosine 5'-phosphosulfate + ATP = 3'-phosphoadenylyl sulfate + ADP + H(+). It functions in the pathway sulfur metabolism; hydrogen sulfide biosynthesis; sulfite from sulfate: step 2/3. Functionally, catalyzes the synthesis of activated sulfate. The sequence is that of Adenylyl-sulfate kinase from Myxococcus xanthus (strain DK1622).